The following is a 377-amino-acid chain: Glutamate 5-kinase (377 aa).

Lys15 serves as a coordination point for ATP. Residues Ser56, Asp143, and Asn155 each contribute to the substrate site. 175–176 (SD) contacts ATP. The PUA domain maps to 281–358 (KGTLTIDAGA…PDVLIILGIS (78 aa)).

This sequence belongs to the glutamate 5-kinase family.

The protein resides in the cytoplasm. The enzyme catalyses L-glutamate + ATP = L-glutamyl 5-phosphate + ADP. It participates in amino-acid biosynthesis; L-proline biosynthesis; L-glutamate 5-semialdehyde from L-glutamate: step 1/2. Functionally, catalyzes the transfer of a phosphate group to glutamate to form L-glutamate 5-phosphate. The polypeptide is Glutamate 5-kinase (Rhodopseudomonas palustris (strain BisA53)).